A 220-amino-acid chain; its full sequence is Large ribosomal subunit protein uL6c (220 aa).

The N-terminal 38 residues, 1 to 38 (MSLPLPSHMKSVFLGMKVEISTSVPVTRIGFWRKSVDC), are a transit peptide targeting the chloroplast.

Component of the chloroplast large ribosomal subunit (LSU). Mature 70S chloroplast ribosomes of higher plants consist of a small (30S) and a large (50S) subunit. The 30S small subunit contains 1 molecule of ribosomal RNA (16S rRNA) and 24 different proteins. The 50S large subunit contains 3 rRNA molecules (23S, 5S and 4.5S rRNA) and 33 different proteins.

It is found in the plastid. It localises to the chloroplast. Component of the chloroplast ribosome (chloro-ribosome), a dedicated translation machinery responsible for the synthesis of chloroplast genome-encoded proteins, including proteins of the transcription and translation machinery and components of the photosynthetic apparatus. This chain is Large ribosomal subunit protein uL6c (RPL6), found in Spinacia oleracea (Spinach).